A 512-amino-acid chain; its full sequence is Tyrosine-protein kinase Lyn (512 aa).

The interval 1–62 is disordered; that stretch reads MGCIKSKGKD…GQRFQTKDPE (62 aa). Gly-2 carries the N-myristoyl glycine lipid modification. The S-palmitoyl cysteine moiety is linked to residue Cys-3. Residues Ser-11 and Ser-13 each carry the phosphoserine modification. In terms of domain architecture, SH3 spans 63–123; sequence EQGDIVVALY…PSNYVAKLNT (61 aa). The SH2 domain maps to 129–226; that stretch reads WFFKDITRKD…GLCRRLEKAC (98 aa). Tyr-193 is subject to Phosphotyrosine. Ser-228 carries the post-translational modification Phosphoserine. One can recognise a Protein kinase domain in the interval 247-501; it reads IKLVKRLGAG…YLQSVLDDFY (255 aa). ATP-binding positions include 253–261 and Lys-275; that span reads LGAGQFGEV. Phosphotyrosine is present on residues Tyr-306 and Tyr-316. Asp-367 (proton acceptor) is an active-site residue. Tyr-397 is modified (phosphotyrosine; by autocatalysis). Phosphotyrosine occurs at positions 460 and 473. Tyr-508 carries the post-translational modification Phosphotyrosine; by autocatalysis, CSK and MATK.

This sequence belongs to the protein kinase superfamily. Tyr protein kinase family. SRC subfamily. Interacts with TEC. Interacts (via SH2 domain) with FLT3 (tyrosine phosphorylated). Interacts with LIME1 and with CD79A upon activation of the B-cell antigen receptor. Interacts with the B-cell receptor complex. Interacts with phosphorylated THEMIS2. Interacts with EPOR. Interacts with MS4A2/FCER1B. Interaction (via the SH2 and SH3 domains) with MUC1 is stimulated by IL7 and the subsequent phosphorylation increases the binding between MUC1 and CTNNB1/beta-catenin. Interacts with ADAM15. Interacts with NDFIP2 and more weakly with NDFIP1. Interacts with FASLG. Interacts with KIT. Interacts with HCLS1. Interacts with FCGR2B. Interacts with FCGR1A; the interaction may be indirect. Interacts with CD19, CD22, CD79A and CD79B. Interacts (via SH3 domain) with CBLC, PPP1R15A and PDE4A. Interacts with TGFB1I1. Interacts (via SH3 domain) with PIK3R1, the regulatory subunit of phosphatidylinositol 3-kinase; this interaction enhances phosphatidylinositol 3-kinase activity. Interacts with CSF2RB, the common subunit of the IL3, IL5 and CSF2 receptors. Interacts with PAG1; identified in a complex with PAG1 and STAT3. Interacts with ABL1. Interacts with PTPN6/SHP-1. Interacts (via SH3 domain) with SCIMP (via proline-rich region). This interaction facilitates the phosphorylation of SCIMP on 'Tyr-107', which enhances binding of SCIMP to TLR4, and consequently the phosphorylation of TLR4 in response to stimulation by lipopolysaccharide in macrophages. Interacts with LPXN (via LD motif 3) and the interaction is induced upon B-cell antigen receptor (BCR) activation. Interacts (via SH3-domain) with ANKRD54 (via ankyrin repeat region) in an activation-independent status of LYN. Forms a multiprotein complex with ANKRD54 and HCLS1. Interacts (via SH2 and SH3 domains) with UNC119; leading to LYN activation. Interacts with CD36. Interacts with LYN. Interacts with SKAP1 and FYB1; this interaction promotes the phosphorylation of CLNK. Interacts with BCAR1/CAS and NEDD9/HEF1. In terms of assembly, (Microbial infection) Interacts with Epstein-Barr virus LMP2A. As to quaternary structure, (Microbial infection) Interacts with Herpes virus saimiri tyrosine kinase interacting protein (Tip). In terms of processing, ubiquitinated by CBL, leading to its degradation. Ubiquitination is SH3-dependent. Autophosphorylated. Phosphorylated on tyrosine residues in response to KIT signaling. Phosphorylation at Tyr-397 is required for optimal activity. Phosphorylation at Tyr-508 inhibits kinase activity. Phosphorylated at Tyr-508 by CSK. Dephosphorylated by PTPRC/CD45. Becomes rapidly phosphorylated upon activation of the B-cell receptor and the immunoglobulin receptor FCGR1A. Phosphorylated in response to ITGB1 in B-cells. In terms of tissue distribution, detected in monocytes (at protein level). Detected in placenta, and in fetal brain, lung, liver and kidney. Widely expressed in a variety of organs, tissues, and cell types such as epidermoid, hematopoietic, and neuronal cells. Expressed in primary neuroblastoma tumors.

It localises to the cell membrane. The protein resides in the nucleus. It is found in the cytoplasm. The protein localises to the perinuclear region. Its subcellular location is the golgi apparatus. It localises to the membrane. The enzyme catalyses L-tyrosyl-[protein] + ATP = O-phospho-L-tyrosyl-[protein] + ADP + H(+). Its activity is regulated as follows. Subject to autoinhibition, mediated by intramolecular interactions between the SH2 domain and the C-terminal phosphotyrosine. Phosphorylation at Tyr-397 is required for optimal activity. Phosphorylated by CSK at Tyr-508; phosphorylation at Tyr-508 inhibits kinase activity. Kinase activity is modulated by dephosphorylation by PTPRC/CD45. Inhibited by Dasatinib, PP2, and SU6656. Non-receptor tyrosine-protein kinase that transmits signals from cell surface receptors and plays an important role in the regulation of innate and adaptive immune responses, hematopoiesis, responses to growth factors and cytokines, integrin signaling, but also responses to DNA damage and genotoxic agents. Functions primarily as negative regulator, but can also function as activator, depending on the context. Required for the initiation of the B-cell response, but also for its down-regulation and termination. Plays an important role in the regulation of B-cell differentiation, proliferation, survival and apoptosis, and is important for immune self-tolerance. Acts downstream of several immune receptors, including the B-cell receptor, CD79A, CD79B, CD5, CD19, CD22, FCER1, FCGR2, FCGR1A, TLR2 and TLR4. Plays a role in the inflammatory response to bacterial lipopolysaccharide. Mediates the responses to cytokines and growth factors in hematopoietic progenitors, platelets, erythrocytes, and in mature myeloid cells, such as dendritic cells, neutrophils and eosinophils. Acts downstream of EPOR, KIT, MPL, the chemokine receptor CXCR4, as well as the receptors for IL3, IL5 and CSF2. Plays an important role in integrin signaling. Regulates cell proliferation, survival, differentiation, migration, adhesion, degranulation, and cytokine release. Involved in the regulation of endothelial activation, neutrophil adhesion and transendothelial migration. Down-regulates signaling pathways by phosphorylation of immunoreceptor tyrosine-based inhibitory motifs (ITIM), that then serve as binding sites for phosphatases, such as PTPN6/SHP-1, PTPN11/SHP-2 and INPP5D/SHIP-1, that modulate signaling by dephosphorylation of kinases and their substrates. Phosphorylates LIME1 in response to CD22 activation. Phosphorylates BTK, CBL, CD5, CD19, CD72, CD79A, CD79B, CSF2RB, DOK1, HCLS1, LILRB3/PIR-B, MS4A2/FCER1B, SYK and TEC. Promotes phosphorylation of SIRPA, PTPN6/SHP-1, PTPN11/SHP-2 and INPP5D/SHIP-1. Mediates phosphorylation of the BCR-ABL fusion protein. Required for rapid phosphorylation of FER in response to FCER1 activation. Mediates KIT phosphorylation. Acts as an effector of EPOR (erythropoietin receptor) in controlling KIT expression and may play a role in erythroid differentiation during the switch between proliferation and maturation. Depending on the context, activates or inhibits several signaling cascades. Regulates phosphatidylinositol 3-kinase activity and AKT1 activation. Regulates activation of the MAP kinase signaling cascade, including activation of MAP2K1/MEK1, MAPK1/ERK2, MAPK3/ERK1, MAPK8/JNK1 and MAPK9/JNK2. Mediates activation of STAT5A and/or STAT5B. Phosphorylates LPXN on 'Tyr-72'. Kinase activity facilitates TLR4-TLR6 heterodimerization and signal initiation. Phosphorylates SCIMP on 'Tyr-107'; this enhances binding of SCIMP to TLR4, promoting the phosphorylation of TLR4, and a selective cytokine response to lipopolysaccharide in macrophages. Phosphorylates CLNK. Phosphorylates BCAR1/CAS and NEDD9/HEF1. In Homo sapiens (Human), this protein is Tyrosine-protein kinase Lyn (LYN).